A 406-amino-acid polypeptide reads, in one-letter code: Nicotinate phosphoribosyltransferase (406 aa).

The residue at position 226 (histidine 226) is a Phosphohistidine; by autocatalysis.

The protein belongs to the NAPRTase family. Post-translationally, transiently phosphorylated on a His residue during the reaction cycle. Phosphorylation strongly increases the affinity for substrates and increases the rate of nicotinate D-ribonucleotide production. Dephosphorylation regenerates the low-affinity form of the enzyme, leading to product release.

It carries out the reaction nicotinate + 5-phospho-alpha-D-ribose 1-diphosphate + ATP + H2O = nicotinate beta-D-ribonucleotide + ADP + phosphate + diphosphate. Its pathway is cofactor biosynthesis; NAD(+) biosynthesis; nicotinate D-ribonucleotide from nicotinate: step 1/1. Catalyzes the synthesis of beta-nicotinate D-ribonucleotide from nicotinate and 5-phospho-D-ribose 1-phosphate at the expense of ATP. The polypeptide is Nicotinate phosphoribosyltransferase (Verminephrobacter eiseniae (strain EF01-2)).